Consider the following 540-residue polypeptide: IQ motif and ankyrin repeat domain-containing protein 1 (540 aa).

Residues 1–17 (MSTKKGGPKAASGKGQA) show a composition bias toward low complexity. Residues 1-62 (MSTKKGGPKA…PQAPAAPTAE (62 aa)) form a disordered region. The 30-residue stretch at 62-91 (EDKAAIVIQCAFRQYLARRELARRCQERQE) folds into the IQ domain. 2 ANK repeats span residues 191–220 (HGNT…NPNT) and 224–253 (FGRT…DPRM). Residues 281 to 388 (LTEAMLKNME…EETLAMARLE (108 aa)) are a coiled coil.

This is IQ motif and ankyrin repeat domain-containing protein 1 from Mus musculus (Mouse).